The chain runs to 190 residues: Protein LZIC (190 aa).

Residues 2-63 (ASRGKTETSK…SEFNDSLKKI (62 aa)) are a coiled coil.

Belongs to the CTNNBIP1 family. In terms of assembly, does not interact with CTNNB1. In terms of tissue distribution, ubiquitously expressed, with highest levels in kidney. Up-regulated in several cases of gastric cancers.

This chain is Protein LZIC (LZIC), found in Homo sapiens (Human).